Here is a 495-residue protein sequence, read N- to C-terminus: DUF21 domain-containing protein At4g14230 (495 aa).

Residues 1-42 are Extracellular-facing; it reads MHPINAVVAARMLAGISQSNALQSEAIPFGSLEWITYAGISC. The 183-residue stretch at 30 to 212 folds into the CNNM transmembrane domain; that stretch reads GSLEWITYAG…GKGGELTHDE (183 aa). A helical transmembrane segment spans residues 43–63; sequence FLVLFAGIMSGLTLGLMSLGL. The Cytoplasmic portion of the chain corresponds to 64 to 92; that stretch reads VELEILQRSGTPKEKKQSAAIFPVVQKQH. The helical transmembrane segment at 93–113 threads the bilayer; that stretch reads QLLVTLLLFNALAMEGLPIYL. Topologically, residues 114–120 are extracellular; it reads DKIFNEY. A helical membrane pass occupies residues 121 to 141; the sequence is VAIILSVTFVLFVGEVIPQAI. The Cytoplasmic segment spans residues 142 to 146; it reads CTRYG. The helical transmembrane segment at 147-167 threads the bilayer; the sequence is LAVGANLVWLVRILMVLSYPI. The Extracellular portion of the chain corresponds to 168–495; it reads SFPIAKMLDW…TMTGPPQGNN (328 aa). CBS domains lie at 231 to 291, 296 to 356, and 357 to 426; these read MTPI…TGTL, GIRR…NNSE, and LTAP…IVDE. The interval 330–354 is disordered; sequence KGKSKGHPSTLHEENSGESNVSSNN. N349 carries an N-linked (GlcNAc...) asparagine glycan. At S352 the chain carries Phosphoserine. N353 carries N-linked (GlcNAc...) asparagine glycosylation. The interval 455–495 is disordered; that stretch reads SGRRLLGPKGSGGPKTPKASSTPKPDDKLMGTMTGPPQGNN. Over residues 456–477 the composition is skewed to low complexity; the sequence is GRRLLGPKGSGGPKTPKASSTP.

The protein resides in the membrane. In Arabidopsis thaliana (Mouse-ear cress), this protein is DUF21 domain-containing protein At4g14230 (CBSDUF2).